The following is a 399-amino-acid chain: MNIHEYQAKAVLQPFGVSLSKGVAILKATDAEAAAKQLGGPIWVVKSQIHAGGRGKGKFKEASAGDKGGVRLAKSIEEVKQYAAEMLGATLVTIQTGPAGKQVNRLYIEDGSDIEKEFYLSLLVDRVTSRISFVVSTEGGMNIEDVAHDTPEKIISFSVDPATGIMGHHGRTVAKALGLTGDLAKQAERLVAQLYAAFISKDMEMLEINPLVVTKQGELKCLDAKMSFDGNALYRHPDISALRDETEEDAKEIEASKYDLNYVTLDGTIGCMVNGAGLAMATMDIIKLYGMTPANFLDVGGGANKEKVTAAFKIITADPNVKGILINIFGGIMKCDIIAEGVVAAVKDVGLKVPLVVRLEGTNVEAGKKIIQESGLNVLSADDLDDAAQKIVKAVKEAA.

The 246-residue stretch at 9 to 254 (KAVLQPFGVS…ETEEDAKEIE (246 aa)) folds into the ATP-grasp domain. ATP-binding positions include K46, 53-55 (GRG), E109, S112, and E117. 2 residues coordinate Mg(2+): N209 and D223. Residues N274 and 331–333 (GIM) each bind substrate.

Belongs to the succinate/malate CoA ligase beta subunit family. In terms of assembly, heterotetramer of two alpha and two beta subunits. The cofactor is Mg(2+).

The enzyme catalyses succinate + ATP + CoA = succinyl-CoA + ADP + phosphate. The catalysed reaction is GTP + succinate + CoA = succinyl-CoA + GDP + phosphate. It functions in the pathway carbohydrate metabolism; tricarboxylic acid cycle; succinate from succinyl-CoA (ligase route): step 1/1. Functionally, succinyl-CoA synthetase functions in the citric acid cycle (TCA), coupling the hydrolysis of succinyl-CoA to the synthesis of either ATP or GTP and thus represents the only step of substrate-level phosphorylation in the TCA. The beta subunit provides nucleotide specificity of the enzyme and binds the substrate succinate, while the binding sites for coenzyme A and phosphate are found in the alpha subunit. This chain is Succinate--CoA ligase [ADP-forming] subunit beta, found in Rhodopseudomonas palustris (strain BisB18).